Reading from the N-terminus, the 794-residue chain is 6-hydroxypseudooxynicotine dehydrogenase complex subunit gamma (794 aa).

In terms of assembly, heterohexamer of 2 alpha (kdhA), 2 beta (kdhB) and 2 gamma (kdhC) subunit. Dimer of heterotrimers. Mo-molybdopterin cytosine dinucleotide is required as a cofactor.

It carries out the reaction 6-hydroxypseudooxynicotine + A + H2O = 2,6-dihydroxypseudooxynicotine + AH2. It functions in the pathway alkaloid degradation; nicotine degradation. In terms of biological role, molybdo-flavoprotein enzyme complex involved in nicotine degradation. The subunit gamma (large subunit) contains the substrate-binding sites, the subunit alpha (medium subunit) binds FAD and the subunit beta (small subunit) has a 2Fe-2S ferredoxin-type domain which binds 2 2Fe-2S clusters. This is 6-hydroxypseudooxynicotine dehydrogenase complex subunit gamma (kdhC) from Paenarthrobacter nicotinovorans (Arthrobacter nicotinovorans).